Consider the following 227-residue polypeptide: ATP-dependent dethiobiotin synthetase BioD (227 aa).

13–18 (DVGKTV) provides a ligand contact to ATP. T17 contributes to the Mg(2+) binding site. K38 is an active-site residue. ATP-binding positions include D55, 116–119 (EGAG), 176–177 (NR), and 205–207 (PYI). Mg(2+) contacts are provided by D55 and E116.

The protein belongs to the dethiobiotin synthetase family. In terms of assembly, homodimer. Mg(2+) is required as a cofactor.

The protein resides in the cytoplasm. It carries out the reaction (7R,8S)-7,8-diammoniononanoate + CO2 + ATP = (4R,5S)-dethiobiotin + ADP + phosphate + 3 H(+). It functions in the pathway cofactor biosynthesis; biotin biosynthesis; biotin from 7,8-diaminononanoate: step 1/2. Catalyzes a mechanistically unusual reaction, the ATP-dependent insertion of CO2 between the N7 and N8 nitrogen atoms of 7,8-diaminopelargonic acid (DAPA, also called 7,8-diammoniononanoate) to form a ureido ring. The protein is ATP-dependent dethiobiotin synthetase BioD of Vibrio vulnificus (strain CMCP6).